Here is a 363-residue protein sequence, read N- to C-terminus: Carbamoyl phosphate synthase small chain (363 aa).

CPSase regions lie at residues 1–168 (MTKR…ASPG) and 1–172 (MTKR…DGKR). The L-glutamine site is built by serine 46, glycine 220, and glycine 222. Residues 172–359 (RVVLVDYGVK…MEMMNVKEEG (188 aa)) enclose the Glutamine amidotransferase type-1 domain. Catalysis depends on cysteine 247, which acts as the Nucleophile. Residues leucine 248, glutamine 251, asparagine 289, glycine 291, and tyrosine 292 each coordinate L-glutamine. Active-site residues include histidine 332 and glutamate 334.

It belongs to the CarA family. In terms of assembly, composed of two chains; the small (or glutamine) chain promotes the hydrolysis of glutamine to ammonia, which is used by the large (or ammonia) chain to synthesize carbamoyl phosphate. Tetramer of heterodimers (alpha,beta)4.

It carries out the reaction hydrogencarbonate + L-glutamine + 2 ATP + H2O = carbamoyl phosphate + L-glutamate + 2 ADP + phosphate + 2 H(+). It catalyses the reaction L-glutamine + H2O = L-glutamate + NH4(+). It participates in amino-acid biosynthesis; L-arginine biosynthesis; carbamoyl phosphate from bicarbonate: step 1/1. Its pathway is pyrimidine metabolism; UMP biosynthesis via de novo pathway; (S)-dihydroorotate from bicarbonate: step 1/3. Small subunit of the glutamine-dependent carbamoyl phosphate synthetase (CPSase). CPSase catalyzes the formation of carbamoyl phosphate from the ammonia moiety of glutamine, carbonate, and phosphate donated by ATP, constituting the first step of 2 biosynthetic pathways, one leading to arginine and/or urea and the other to pyrimidine nucleotides. The small subunit (glutamine amidotransferase) binds and cleaves glutamine to supply the large subunit with the substrate ammonia. The polypeptide is Carbamoyl phosphate synthase small chain (Listeria innocua serovar 6a (strain ATCC BAA-680 / CLIP 11262)).